Consider the following 604-residue polypeptide: Aspartate--tRNA(Asp/Asn) ligase (604 aa).

Glutamate 174 provides a ligand contact to L-aspartate. Residues 198-201 (QLYK) form an aspartate region. Arginine 220 contacts L-aspartate. Residues 220–222 (RDE) and glutamine 229 contribute to the ATP site. Histidine 460 is an L-aspartate binding site. Glutamate 494 serves as a coordination point for ATP. Arginine 501 serves as a coordination point for L-aspartate. 546–549 (GLDR) is an ATP binding site.

This sequence belongs to the class-II aminoacyl-tRNA synthetase family. Type 1 subfamily. As to quaternary structure, homodimer.

It localises to the cytoplasm. The catalysed reaction is tRNA(Asx) + L-aspartate + ATP = L-aspartyl-tRNA(Asx) + AMP + diphosphate. Its function is as follows. Aspartyl-tRNA synthetase with relaxed tRNA specificity since it is able to aspartylate not only its cognate tRNA(Asp) but also tRNA(Asn). Reaction proceeds in two steps: L-aspartate is first activated by ATP to form Asp-AMP and then transferred to the acceptor end of tRNA(Asp/Asn). In Paracidovorax citrulli (strain AAC00-1) (Acidovorax citrulli), this protein is Aspartate--tRNA(Asp/Asn) ligase.